Reading from the N-terminus, the 432-residue chain is Cyclic di-GMP phosphodiesterase CdgJ (432 aa).

Residues 1-232 (MVRCLWAAEC…QRYVSPEHVI (232 aa)) enclose the EAL domain. The HDOD domain maps to 226-413 (VSPEHVIAMQ…CLELGFDLED (188 aa)).

The enzyme catalyses 3',3'-c-di-GMP + H2O = 5'-phosphoguanylyl(3'-&gt;5')guanosine + H(+). Phosphodiesterase (PDE) that catalyzes the hydrolysis of cyclic diguanylate (c-di-GMP). Positively regulates motility and negatively regulates biofilm formation. The protein is Cyclic di-GMP phosphodiesterase CdgJ of Vibrio cholerae serotype O1 (strain ATCC 39315 / El Tor Inaba N16961).